Here is a 405-residue protein sequence, read N- to C-terminus: Double C2-like domain-containing protein alpha (405 aa).

An interaction with UNC13D and DYNLT1 region spans residues 1–94 (MRGRRGDRMT…DSYDSDDTTA (94 aa)). Positions 34–54 (DYFPRRGPGPEGGGGGGGTGC) are disordered. The segment covering 42 to 54 (GPEGGGGGGGTGC) has biased composition (gly residues). C2 domains lie at 94–216 (ALGT…HFNI) and 256–389 (ERGR…ERWH). Residues Asp-125, Asp-131, Asp-186, Asp-188, Asp-287, Asp-293, Asp-347, Asp-349, and Asp-355 each coordinate Ca(2+). An interaction with UNC13D region spans residues 220 to 405 (RQVPLPSPSS…PPAAGAYPLA (186 aa)).

In terms of assembly, interacts (via N-terminus) with UNC13A. Interacts with cytoplasmic dynein light chain DYNLT1. Interacts with UNC13D. Requires Ca(2+) as cofactor. As to expression, brain and mast cells.

Its subcellular location is the cytoplasmic vesicle. It localises to the secretory vesicle. The protein localises to the synaptic vesicle membrane. It is found in the synapse. The protein resides in the synaptosome. Its subcellular location is the lysosome. In terms of biological role, calcium sensor which most probably regulates fusion of vesicles with membranes. Binds calcium and phospholipids. May be involved in calcium dependent neurotransmitter release through the interaction with UNC13A. May be involved in calcium-dependent spontaneous release of neurotransmitter in absence of action potentials in neuronal cells. Regulates Ca(2+)-dependent secretory lysosome exocytosis in mast cells. This is Double C2-like domain-containing protein alpha (Doc2a) from Mus musculus (Mouse).